The following is a 427-amino-acid chain: Tuberculostearic acid methyltransferase UfaA1 (427 aa).

It belongs to the CFA/CMAS family.

The protein operates within lipid metabolism; fatty acid biosynthesis. Inhibited by S-adenosyl-L-homocysteine. Functionally, involved in the biosynthesis of the tuberculostearic acid (10-methylstearic-acid or TSA), a constituent lipid of the mycobacterial cell wall. Catalyzes the transfer of the methyl group from S-adenosyl-L-methionine (SAM) to the double bond of oleic acid in phosphatidylethanolamine or phosphatidylcholine to produce TSA. This chain is Tuberculostearic acid methyltransferase UfaA1, found in Mycobacterium tuberculosis (strain ATCC 25618 / H37Rv).